We begin with the raw amino-acid sequence, 246 residues long: 2-C-methyl-D-erythritol 4-phosphate cytidylyltransferase (246 aa).

The protein belongs to the IspD/TarI cytidylyltransferase family. IspD subfamily.

It catalyses the reaction 2-C-methyl-D-erythritol 4-phosphate + CTP + H(+) = 4-CDP-2-C-methyl-D-erythritol + diphosphate. Its pathway is isoprenoid biosynthesis; isopentenyl diphosphate biosynthesis via DXP pathway; isopentenyl diphosphate from 1-deoxy-D-xylulose 5-phosphate: step 2/6. Functionally, catalyzes the formation of 4-diphosphocytidyl-2-C-methyl-D-erythritol from CTP and 2-C-methyl-D-erythritol 4-phosphate (MEP). In Chlorobaculum tepidum (strain ATCC 49652 / DSM 12025 / NBRC 103806 / TLS) (Chlorobium tepidum), this protein is 2-C-methyl-D-erythritol 4-phosphate cytidylyltransferase.